A 146-amino-acid polypeptide reads, in one-letter code: Large ribosomal subunit protein uL15 (146 aa).

The interval M1–P62 is disordered. Residues T10 to R21 show a composition bias toward basic residues. The span at T42–G52 shows a compositional bias: gly residues.

Belongs to the universal ribosomal protein uL15 family. Part of the 50S ribosomal subunit.

Functionally, binds to the 23S rRNA. The chain is Large ribosomal subunit protein uL15 from Natranaerobius thermophilus (strain ATCC BAA-1301 / DSM 18059 / JW/NM-WN-LF).